Reading from the N-terminus, the 739-residue chain is Malate synthase G (739 aa).

Over residues 1-18 (MTEQELLSAQTADNAGTD) the composition is skewed to polar residues. The interval 1 to 23 (MTEQELLSAQTADNAGTDSTERV) is disordered. Acetyl-CoA is bound by residues Val135, 142–143 (RF), Ser292, and Arg329. Arg356 serves as the catalytic Proton acceptor. Glyoxylate contacts are provided by residues Arg356, Glu447, and 472–475 (GFLD). Mg(2+)-binding residues include Glu447 and Asp475. Pro556 is a binding site for acetyl-CoA. Cys633 carries the post-translational modification Cysteine sulfenic acid (-SOH). Asp647 acts as the Proton donor in catalysis.

It belongs to the malate synthase family. GlcB subfamily. Monomer. It depends on Mg(2+) as a cofactor.

It is found in the cytoplasm. It carries out the reaction glyoxylate + acetyl-CoA + H2O = (S)-malate + CoA + H(+). It functions in the pathway carbohydrate metabolism; glyoxylate cycle; (S)-malate from isocitrate: step 2/2. With respect to regulation, inhibited by oxalate, glycolate and ATP. Its function is as follows. Involved in the glycolate utilization. Catalyzes the condensation and subsequent hydrolysis of acetyl-coenzyme A (acetyl-CoA) and glyoxylate to form malate and CoA. This chain is Malate synthase G, found in Corynebacterium glutamicum (strain ATCC 13032 / DSM 20300 / JCM 1318 / BCRC 11384 / CCUG 27702 / LMG 3730 / NBRC 12168 / NCIMB 10025 / NRRL B-2784 / 534).